A 312-amino-acid chain; its full sequence is Salivary protein SG34 (312 aa).

The first 20 residues, 1 to 20 (MSPSKKILVLLLFPILLVSS), serve as a signal peptide directing secretion. A coiled-coil region spans residues 95–158 (NMEVQLLRES…QEEIEEQTKQ (64 aa)).

The protein belongs to the salivary protein SG34 family. Female salivary gland (at protein level). Low-level expression in ovary.

Possible serine protease. In terms of biological role, (Microbial infection) Modulates replication of duck Tembusu virus in salivary glands and virus release into the saliva, probably via the regulation of antimicrobial peptides expression in response to virus infection. Functionally, (Microbial infection) Enhances replication of dengue virus type 2 in human keratinocytes, probably by suppressing the production of type I interferons and antimicrobial peptides in response to virus infection. The protein is Salivary protein SG34 of Aedes aegypti (Yellowfever mosquito).